Here is a 661-residue protein sequence, read N- to C-terminus: MSDGTATPDPLPSSSNTSTSLRPTSRVRDESDVIGKLNDMIEEQPTDIFLYVKLLKHHVSLKQWKQVYETFDKLHDRFPLMANIWCMRLSLEFDKMEELDAAVIEPVLARCLSKELGNNDLSLWLSYITYVRKKNDIITGGEEARNIVIQAFQVVVDKCAIFEPKSIQFWNEYLHFLEHWKPVNKFEEQQRVQYIRKLYKTLLCQPMDCLESMWQRYTQWEQDVNQLTARRHIGELSAQYMNARSLYQDWLNITKGLKRNLPITLNQATESNLPKPNEYDVQQLLIWLEWIRWESDNKLELSDDLHKARMTYVYMQAAQHVCFAPEIWFNMANYQGEKNTDSTVITKYLKLGQQCIPNSAVLAFSLSEQYELNTKIPEIETTILSCIDRIHLDLAALMEDDPTNESAINQLKSKLTYVYCVYMNTMKRIQGLAASRKIFGKCRRLKKLVTPDIYLENAYIEYHISKDTKTACKVLELGLKYFATDGEYINKYLDFLIYVNEESQVKSLFESSIDKISDSHLLKMIFQKVIFFESKVGSLNSVRTLEKRFFEKFPEVNKLEEFTNKYKVLDVNYLQRLELDYMVRDVMPEAIALDRGSNNLKRTMREEEDGQAFKKFKANEDPIPPEIVELLKVLPKRQYFKVTIFEAHAFSEFLSDKVTIQ.

Residues 1–29 (MSDGTATPDPLPSSSNTSTSLRPTSRVRD) form a disordered region. Low complexity predominate over residues 12-24 (PSSSNTSTSLRPT). HAT repeat units follow at residues 62–94 (KQWK…LEFD), 99–133 (LDAA…YVRK), 143–179 (EARN…FLEH), 190–223 (QRVQ…WEQD), 264–296 (TLNQ…WESD), and 305–337 (LHKA…YQGE).

It localises to the nucleus. Its subcellular location is the cytoplasm. Functionally, component of the cleavage factor IA (CFIA) complex, which is involved in the endonucleolytic cleavage during polyadenylation-dependent pre-mRNA 3'-end formation. This chain is mRNA 3'-end-processing protein RNA14 (RNA14), found in Kluyveromyces lactis (strain ATCC 8585 / CBS 2359 / DSM 70799 / NBRC 1267 / NRRL Y-1140 / WM37) (Yeast).